Reading from the N-terminus, the 454-residue chain is Phosphoglucosamine mutase (454 aa).

Ser104 acts as the Phosphoserine intermediate in catalysis. Residues Ser104, Asp241, Asp243, and Asp245 each coordinate Mg(2+). Phosphoserine is present on Ser104.

This sequence belongs to the phosphohexose mutase family. Mg(2+) serves as cofactor. Post-translationally, activated by phosphorylation.

It carries out the reaction alpha-D-glucosamine 1-phosphate = D-glucosamine 6-phosphate. In terms of biological role, catalyzes the conversion of glucosamine-6-phosphate to glucosamine-1-phosphate. This chain is Phosphoglucosamine mutase, found in Paenarthrobacter aurescens (strain TC1).